The sequence spans 113 residues: Prefoldin subunit beta (113 aa).

It belongs to the prefoldin subunit beta family. Heterohexamer of two alpha and four beta subunits.

The protein resides in the cytoplasm. In terms of biological role, molecular chaperone capable of stabilizing a range of proteins. Seems to fulfill an ATP-independent, HSP70-like function in archaeal de novo protein folding. The polypeptide is Prefoldin subunit beta (Methanococcus maripaludis (strain C6 / ATCC BAA-1332)).